A 415-amino-acid chain; its full sequence is ATP-dependent Clp protease ATP-binding subunit ClpX (415 aa).

Residues 1–52 form the ClpX-type ZB domain; that stretch reads MAESKNNKKRCSFCGRSENEVGFLITGMNGYICDSCATQAYEITQEAMGAGK. Zn(2+) contacts are provided by Cys11, Cys14, Cys33, and Cys36. 121-128 serves as a coordination point for ATP; sequence STGTGKTL.

The protein belongs to the ClpX chaperone family. In terms of assembly, component of the ClpX-ClpP complex. Forms a hexameric ring that, in the presence of ATP, binds to fourteen ClpP subunits assembled into a disk-like structure with a central cavity, resembling the structure of eukaryotic proteasomes.

In terms of biological role, ATP-dependent specificity component of the Clp protease. It directs the protease to specific substrates. Can perform chaperone functions in the absence of ClpP. In Bacteroides fragilis (strain ATCC 25285 / DSM 2151 / CCUG 4856 / JCM 11019 / LMG 10263 / NCTC 9343 / Onslow / VPI 2553 / EN-2), this protein is ATP-dependent Clp protease ATP-binding subunit ClpX.